An 883-amino-acid chain; its full sequence is DNA double-strand break repair Rad50 ATPase (883 aa).

Residues K12, 32–38 (NGSGKSS), and Q137 each bind ATP. A coiled-coil region spans residues 244–283 (ERYEESRTALADVEETIADVREAVAEAERERETLADRVSD). Disordered stretches follow at residues 271–290 (ERERETLADRVSDHRERASD) and 305–326 (DDPDAEDASAERDAVADQREAV). Positions 313–326 (SAERDAVADQREAV) are enriched in basic and acidic residues. Coiled-coil stretches lie at residues 336-389 (AVSR…IEAL) and 414-452 (LDDATAERDELRERVATLRADRQSAADRVAEAEALLDEG). One can recognise a Zinc-hook domain in the interval 407 to 506 (FGAAEAFLDD…RVDRGESLVA (100 aa)). Residues C454 and C457 each coordinate Zn(2+). A disordered region spans residues 508 to 565 (EDRVDDLEQQRERAVERRDEQADIADAKRDQAAEKRDRAADLDAEAEDARADAAAKRD). Coiled coils occupy residues 571–604 (RETLAALNADQTALKERLDALADLVDRLEAAADA) and 668–720 (KLQA…VTAL).

Belongs to the SMC family. RAD50 subfamily. In terms of assembly, homodimer. Forms a heterotetramer composed of two Mre11 subunits and two Rad50 subunits. The cofactor is Zn(2+).

Functionally, part of the Rad50/Mre11 complex, which is involved in the early steps of DNA double-strand break (DSB) repair. Rad50 controls the balance between DNA end bridging and DNA resection via ATP-dependent structural rearrangements of the Rad50/Mre11 complex. The polypeptide is DNA double-strand break repair Rad50 ATPase (Halobacterium salinarum (strain ATCC 700922 / JCM 11081 / NRC-1) (Halobacterium halobium)).